A 654-amino-acid chain; its full sequence is Endoplasmic reticulum chaperone BiP (654 aa).

The first 18 residues, 1–18, serve as a signal peptide directing secretion; sequence MKLSLVAAMLLLLSAARA. A required for interaction with ELAPOR1 region spans residues 1–80; it reads MKLSLVAAML…EGERLIGDAA (80 aa). 36 to 39 is a binding site for ATP; that stretch reads GTTY. Residue serine 86 is modified to Phosphoserine. Lysine 96 serves as a coordination point for ATP. Lysine 125 carries the post-translational modification N6-acetyllysine. The interval 125-280 is nucleotide-binding (NBD); the sequence is KPYIQVDIGG…KKKTGKDVRK (156 aa). A 3'-nitrotyrosine modification is found at tyrosine 160. Residue lysine 213 is modified to N6-acetyllysine. Residue 227-229 participates in ATP binding; it reads GGT. Residue lysine 271 is modified to N6-acetyllysine. 293-300 is an ATP binding site; sequence EKAKRALS. An N6-acetyllysine modification is found at lysine 326. Residue lysine 352 forms a Glycyl lysine isopeptide (Lys-Gly) (interchain with G-Cter in SUMO2) linkage. At lysine 353 the chain carries N6-acetyllysine; alternate. A Glycyl lysine isopeptide (Lys-Gly) (interchain with G-Cter in SUMO1); alternate cross-link involves residue lysine 353. Position 364 to 367 (364 to 367) interacts with ATP; that stretch reads GSTR. The tract at residues 409 to 419 is interdomain linker; sequence QDTGDLVLLDV. The tract at residues 420–500 is substrate-binding (SBD); that stretch reads CPLTLGIETV…PRGVPQIEVT (81 aa). Position 447 is an N6-succinyllysine (lysine 447). The residue at position 492 (arginine 492) is an Omega-N-methylarginine. Residue threonine 518 is modified to O-AMP-threonine; alternate. Position 518 is a phosphothreonine; alternate (threonine 518). An N6,N6,N6-trimethyllysine; by METTL21A; in vitro modification is found at lysine 585. Lysine 585 bears the N6,N6-dimethyllysine; alternate mark. Lysine 585 carries the N6-methyllysine; alternate modification. At lysine 591 the chain carries N6-methyllysine. The tract at residues 633–654 is disordered; sequence KLYGSAGPPPTGEEDTAEKDEL. Phosphothreonine is present on residues threonine 643 and threonine 648. Positions 644 to 654 are enriched in acidic residues; sequence GEEDTAEKDEL. The Prevents secretion from ER motif lies at 651-654; it reads KDEL.

The protein belongs to the heat shock protein 70 family. In terms of assembly, monomer and homooligomer; homooligomerization via the interdomain linker inactivates the chaperone activity and acts as a storage of HSPA5/BiP molecules. Interacts with DNAJC1 (via J domain). Component of an EIF2 complex at least composed of CELF1/CUGBP1, CALR, CALR3, EIF2S1, EIF2S2, HSP90B1 and HSPA5. Part of a large chaperone multiprotein complex comprising DNAJB11, HSP90B1, HSPA5, HYOU, PDIA2, PDIA4, PDIA6, PPIB, SDF2L1, UGGT1 and very small amounts of ERP29, but not, or at very low levels, CALR nor CANX. Interacts with TMEM132A and TRIM21. May form a complex with ERLEC1, OS9, SEL1L and SYVN1. Interacts with DNAJC10. Interacts with DNAJB9/ERdj4; leading to recruit HSPA5/BiP to ERN1/IRE1. Interacts with ERN1/IRE1 (via luminal domain); the interaction takes place following interaction with DNAJB9/ERdj4 and leads to inactivate ERN1/IRE1, the interaction also competitively inhibits ERN1 interaction with MANF. Interacts directly with MANF (via SAP domain); the interaction inhibits ATP binding to HSPA5/BiP and subsequent nucleotide exchange. Interacts with EIF2AK3/PERK (via luminal domain); interaction leads to inactivate EIF2AK3/PERK. Interacts with MX1. Interacts with METTL23. Interacts with CEMIP; the interaction induces calcium leakage from the endoplasmic reticulum and cell migration. Interacts with PCSK4 form; the interaction takes place in the endoplasmic reticulum. Interacts with CIPC. Interacts with CCDC88B (via C-terminus); the interaction opposes ERN1-mediated JNK activation, protecting against apoptosis. Interacts with INPP5K; necessary for INPP5K localization at the endoplasmic reticulum. Interacts with MANF; the interaction is direct. Interacts with LOXL2; leading to activate the ERN1/IRE1-XBP1 pathway of the unfolded protein response. Interacts with CLU under stressed condition; interaction increases CLU protein stability; facilitates its retrotranslocation and redistribution to the mitochondria; cooperatively suppress stress-induced apoptosis by stabilizing mitochondrial membrane integrity. Interacts with CCDC47. Interacts with CLN3. Interacts with ELAPOR1; may regulate the function of HSPA5 in apoptosis and cell proliferation. Interacts with CASP7. Interacts with ILDR2; the interaction stabilizes ILDR2 expression. Interacts with ADAM7. (Microbial infection) Interacts with Japanese encephalitis virus envelope protein E. As to quaternary structure, (Microbial infection) Interacts with R.delemar invasin CotH3 on the surface of nasal epithelial cells. Interacts with R.delemar invasin CotH2. In terms of assembly, (Microbial infection) Interacts with Zika virus envelope protein E and non-structural protein 1 in a chaperone-client manner. In terms of processing, AMPylated by FICD. In unstressed cells, AMPylation at Thr-518 by FICD inactivates the chaperome activity: AMPylated form is locked in a relatively inert state and only weakly stimulated by J domain-containing proteins. In response to endoplasmic reticulum stress, de-AMPylation by the same protein, FICD, restores the chaperone activity.

Its subcellular location is the endoplasmic reticulum lumen. It is found in the melanosome. It localises to the cytoplasm. The protein resides in the cell surface. The enzyme catalyses ATP + H2O = ADP + phosphate + H(+). With respect to regulation, the chaperone activity is regulated by ATP-induced allosteric coupling of the nucleotide-binding (NBD) and substrate-binding (SBD) domains. In the ADP-bound and nucleotide-free (apo) states, the two domains have little interaction. In contrast, in the ATP-bound state the two domains are tightly coupled, which results in drastically accelerated kinetics in both binding and release of polypeptide substrates. J domain-containing co-chaperones (DNAJB9/ERdj4 or DNAJC10/ERdj5) stimulate the ATPase activity and are required for efficient substrate recognition by HSPA5/BiP. Homooligomerization inactivates participating HSPA5/BiP protomers and probably act as reservoirs to store HSPA5/BiP molecules when they are not needed by the cell. Endoplasmic reticulum chaperone that plays a key role in protein folding and quality control in the endoplasmic reticulum lumen. Involved in the correct folding of proteins and degradation of misfolded proteins via its interaction with DNAJC10/ERdj5, probably to facilitate the release of DNAJC10/ERdj5 from its substrate. Acts as a key repressor of the EIF2AK3/PERK and ERN1/IRE1-mediated unfolded protein response (UPR). In the unstressed endoplasmic reticulum, recruited by DNAJB9/ERdj4 to the luminal region of ERN1/IRE1, leading to disrupt the dimerization of ERN1/IRE1, thereby inactivating ERN1/IRE1. Also binds and inactivates EIF2AK3/PERK in unstressed cells. Accumulation of misfolded protein in the endoplasmic reticulum causes release of HSPA5/BiP from ERN1/IRE1 and EIF2AK3/PERK, allowing their homodimerization and subsequent activation. Plays an auxiliary role in post-translational transport of small presecretory proteins across endoplasmic reticulum (ER). May function as an allosteric modulator for SEC61 channel-forming translocon complex, likely cooperating with SEC62 to enable the productive insertion of these precursors into SEC61 channel. Appears to specifically regulate translocation of precursors having inhibitory residues in their mature region that weaken channel gating. May also play a role in apoptosis and cell proliferation. Its function is as follows. (Microbial infection) Plays an important role in viral binding to the host cell membrane and entry for several flaviruses such as Dengue virus, Zika virus and Japanese encephalitis virus. Acts as a component of the cellular receptor for Dengue virus serotype 2/DENV-2 on human liver cells. In terms of biological role, (Microbial infection) Acts as a receptor for CotH proteins expressed by fungi of the order mucorales, the causative agent of mucormycosis, which plays an important role in epithelial cell invasion by the fungi. Acts as a receptor for R.delemar CotH3 in nasal epithelial cells, which may be an early step in rhinoorbital/cerebral mucormycosis (RCM) disease progression. The chain is Endoplasmic reticulum chaperone BiP from Homo sapiens (Human).